Consider the following 329-residue polypeptide: GTPase Obg (329 aa).

An Obg domain is found at 1–159 (MQFIDQARIT…WPLQLELKLL (159 aa)). Residues 160–328 (AEVGIIGLPN…LLAETWVELG (169 aa)) form the OBG-type G domain. ATP is bound by residues 166 to 173 (GLPNAGKS), 191 to 195 (FTTLV), 213 to 216 (DIPG), 280 to 283 (NKQE), and 309 to 311 (SAA). Ser-173 and Thr-193 together coordinate Mg(2+).

Belongs to the TRAFAC class OBG-HflX-like GTPase superfamily. OBG GTPase family. Monomer. The cofactor is Mg(2+).

Its subcellular location is the cytoplasm. In terms of biological role, an essential GTPase which binds GTP, GDP and possibly (p)ppGpp with moderate affinity, with high nucleotide exchange rates and a fairly low GTP hydrolysis rate. Plays a role in control of the cell cycle, stress response, ribosome biogenesis and in those bacteria that undergo differentiation, in morphogenesis control. This is GTPase Obg from Synechococcus sp. (strain CC9605).